A 620-amino-acid polypeptide reads, in one-letter code: Methionine--tRNA ligase (620 aa).

The 'HIGH' region signature appears at Pro-11–His-21. Residues Cys-143, Cys-146, Cys-156, and Cys-159 each coordinate Zn(2+). The short motif at Lys-347–Ser-351 is the 'KMSKS' region element. Residue Ser-350 coordinates ATP.

This sequence belongs to the class-I aminoacyl-tRNA synthetase family. MetG type 1 subfamily. As to quaternary structure, monomer. It depends on Zn(2+) as a cofactor.

It localises to the cytoplasm. The enzyme catalyses tRNA(Met) + L-methionine + ATP = L-methionyl-tRNA(Met) + AMP + diphosphate. In terms of biological role, is required not only for elongation of protein synthesis but also for the initiation of all mRNA translation through initiator tRNA(fMet) aminoacylation. The chain is Methionine--tRNA ligase from Bifidobacterium adolescentis (strain ATCC 15703 / DSM 20083 / NCTC 11814 / E194a).